The primary structure comprises 563 residues: uncharacterized protein (563 aa).

The segment at residues 19-45 is a DNA-binding region (zn(2)-C6 fungal-type); it reads CLICRRRKVKCDRQQPCSRCKERNEVC. Residues 56 to 78 form a disordered region; it reads NVGPHPSHSENASDSETTLEVSP. Residues 64 to 75 show a composition bias toward polar residues; that stretch reads SENASDSETTLE.

It is found in the nucleus. This is an uncharacterized protein from Schizosaccharomyces pombe (strain 972 / ATCC 24843) (Fission yeast).